The primary structure comprises 275 residues: Large ribosomal subunit protein uL2c (275 aa).

Disordered stretches follow at residues 1–28 and 227–251; these read MGIR…TKSK and PCDH…TPWG. Positions 10 to 22 are enriched in polar residues; that stretch reads TPGTRNRSSSDFS.

It belongs to the universal ribosomal protein uL2 family. In terms of assembly, part of the 50S ribosomal subunit.

It is found in the plastid. It localises to the chloroplast. This Rhodomonas salina (Cryptomonas salina) protein is Large ribosomal subunit protein uL2c (rpl2).